A 255-amino-acid polypeptide reads, in one-letter code: Small ribosomal subunit protein uS2 (255 aa).

The protein belongs to the universal ribosomal protein uS2 family.

In Streptococcus pyogenes serotype M3 (strain ATCC BAA-595 / MGAS315), this protein is Small ribosomal subunit protein uS2.